A 175-amino-acid chain; its full sequence is Co-chaperone protein HscB homolog (175 aa).

Residues 8-80 enclose the J domain; sequence DFFSLFGLPR…LNRARYLLQL (73 aa).

The protein belongs to the HscB family. In terms of assembly, interacts with HscA and stimulates its ATPase activity.

Co-chaperone involved in the maturation of iron-sulfur cluster-containing proteins. Seems to help targeting proteins to be folded toward HscA. The chain is Co-chaperone protein HscB homolog from Chromobacterium violaceum (strain ATCC 12472 / DSM 30191 / JCM 1249 / CCUG 213 / NBRC 12614 / NCIMB 9131 / NCTC 9757 / MK).